The sequence spans 100 residues: Small ribosomal subunit protein uS14c (100 aa).

The protein belongs to the universal ribosomal protein uS14 family. In terms of assembly, part of the 30S ribosomal subunit.

It localises to the plastid. Binds 16S rRNA, required for the assembly of 30S particles. The polypeptide is Small ribosomal subunit protein uS14c (Aneura mirabilis (Parasitic liverwort)).